We begin with the raw amino-acid sequence, 466 residues long: MTGKIVQVLGPVIDVDFTDYLPEINEALETTFMFEGKEQKLVLEVAAQLGDNRVRTIAMDMSEGVVRGQEVKATGDSIQVPVGEEVLGRIFNVIGEAIDEAGPVEAKTHWSIHRDPPPFEDQSTKTEVFETGIKVVDLLAPYSKGGKVGLFGGAGVGKTVIIMELINNVAMKHSGYSVFAGVGERTREGNDLYYEMKESNVLDKVALCYGQMSEPPGARNRIALTGLTMAEYFRDEMGLDVLMFIDNIFRFAQSGSEMSALLGRIPSAVGYQPTLSREMGALQERITSTTKGSITSVQAVYVPADDLTDPAPASVFAHLDATTVLNRSIAEKGIYPAVDPLDSTSRMLDPQIIGEEHYNVARGVQQILQKYKDLQDIIAILGMDELSEDDKLVVERARKIEKYLSQPFHVAEVFTGSPGVYVTLEDTIEGFKGLLEGKYDDMNEAAFYMVGNMAEAIAKNDKINAK.

An ATP-binding site is contributed by 152–159 (GGAGVGKT).

It belongs to the ATPase alpha/beta chains family. In terms of assembly, F-type ATPases have 2 components, CF(1) - the catalytic core - and CF(0) - the membrane proton channel. CF(1) has five subunits: alpha(3), beta(3), gamma(1), delta(1), epsilon(1). CF(0) has three main subunits: a(1), b(2) and c(9-12). The alpha and beta chains form an alternating ring which encloses part of the gamma chain. CF(1) is attached to CF(0) by a central stalk formed by the gamma and epsilon chains, while a peripheral stalk is formed by the delta and b chains.

It localises to the cell inner membrane. The enzyme catalyses ATP + H2O + 4 H(+)(in) = ADP + phosphate + 5 H(+)(out). Produces ATP from ADP in the presence of a proton gradient across the membrane. The catalytic sites are hosted primarily by the beta subunits. The polypeptide is ATP synthase subunit beta (Sulfurovum sp. (strain NBC37-1)).